Here is a 465-residue protein sequence, read N- to C-terminus: Lactaldehyde dehydrogenase (465 aa).

220 to 225 serves as a coordination point for NAD(+); sequence GSVEIG. Catalysis depends on residues glutamate 240 and cysteine 274.

It belongs to the aldehyde dehydrogenase family. Homotetramer.

It carries out the reaction (S)-lactaldehyde + NAD(+) + H2O = (S)-lactate + NADH + 2 H(+). Its pathway is cofactor biosynthesis; coenzyme F420 biosynthesis. Its function is as follows. Involved in F420 biosynthesis through the oxidation of lactaldehyde to lactate. The chain is Lactaldehyde dehydrogenase from Methanococcus maripaludis (strain C7 / ATCC BAA-1331).